The chain runs to 146 residues: Transcriptional regulator MraZ (146 aa).

2 consecutive SpoVT-AbrB domains span residues 5-51 (NHPT…PLQE) and 80-123 (GQMV…NHEA).

It belongs to the MraZ family. Forms oligomers.

It localises to the cytoplasm. Its subcellular location is the nucleoid. The polypeptide is Transcriptional regulator MraZ (Acidobacterium capsulatum (strain ATCC 51196 / DSM 11244 / BCRC 80197 / JCM 7670 / NBRC 15755 / NCIMB 13165 / 161)).